A 101-amino-acid chain; its full sequence is NAD(P)H-quinone oxidoreductase subunit 4L, chloroplastic (101 aa).

The next 3 helical transmembrane spans lie at 2–22 (ILDSLLILAASVFCIGIYGLI), 32–52 (MSLELLLNAVNINFVAFSNFI), and 64–84 (IFIMTIAAAEAAVGLALILAI).

Belongs to the complex I subunit 4L family. NDH is composed of at least 16 different subunits, 5 of which are encoded in the nucleus.

It is found in the plastid. The protein localises to the chloroplast thylakoid membrane. The catalysed reaction is a plastoquinone + NADH + (n+1) H(+)(in) = a plastoquinol + NAD(+) + n H(+)(out). It catalyses the reaction a plastoquinone + NADPH + (n+1) H(+)(in) = a plastoquinol + NADP(+) + n H(+)(out). Its function is as follows. NDH shuttles electrons from NAD(P)H:plastoquinone, via FMN and iron-sulfur (Fe-S) centers, to quinones in the photosynthetic chain and possibly in a chloroplast respiratory chain. The immediate electron acceptor for the enzyme in this species is believed to be plastoquinone. Couples the redox reaction to proton translocation, and thus conserves the redox energy in a proton gradient. This is NAD(P)H-quinone oxidoreductase subunit 4L, chloroplastic from Chlorokybus atmophyticus (Soil alga).